An 817-amino-acid polypeptide reads, in one-letter code: Collagen-like protein 4 (817 aa).

Collagen-like domains follow at residues G83–D142, G145–D264, and G268–K327. 3 disordered regions span residues N87–G107, F120–D458, and I479–I543. N-linked (GlcNAc...) asparagine; by host glycans are attached at residues N106 and N121. Basic and acidic residues-rich tracts occupy residues I126 to Q141 and Q149 to I161. A glycan (N-linked (GlcNAc...) asparagine; by host) is linked at N183. Basic and acidic residues-rich tracts occupy residues I212–I224 and S233–T245. The segment covering K246–S260 has biased composition (low complexity). Positions K294–K341 are enriched in basic and acidic residues. 2 N-linked (GlcNAc...) asparagine; by host glycosylation sites follow: N345 and N360. Collagen-like domains are found at residues G352–V411 and G430–K489. Basic and acidic residues-rich tracts occupy residues K354–D368, S377–L390, and S428–D458. Residues I480 to N494 are compositionally biased toward low complexity. N483 carries an N-linked (GlcNAc...) asparagine; by host glycan. Composition is skewed to basic and acidic residues over residues K495–T504, I515–K525, and E533–I543. In terms of domain architecture, Collagen-like 6 spans T512–S570. N-linked (GlcNAc...) asparagine; by host glycans are attached at residues N709, N712, and N715. Residues G757 to G771 show a composition bias toward gly residues. The tract at residues G757–G804 is disordered. N772 carries an N-linked (GlcNAc...) asparagine; by host glycan.

In terms of processing, may be hydroxylated on lysine by the viral-encoded procollagen-lysine,2-oxoglutarate 5-dioxygenase.

It is found in the virion. In terms of biological role, may participate in the formation of a layer of cross-linked glycosylated fibrils at the viral surface thus giving it a hairy-like appearance. This Acanthamoeba polyphaga (Amoeba) protein is Collagen-like protein 4.